A 579-amino-acid chain; its full sequence is uncharacterized protein (579 aa).

In terms of domain architecture, GGDEF spans 449–577; it reads QKGVFILVDI…GKNRLMIHDS (129 aa).

This is an uncharacterized protein from Bacillus subtilis (strain 168).